The following is a 184-amino-acid chain: UPF0398 protein BALH_1408 (184 aa).

It belongs to the UPF0398 family.

The polypeptide is UPF0398 protein BALH_1408 (Bacillus thuringiensis (strain Al Hakam)).